The chain runs to 97 residues: MIGQCATLLDIVLTEQPEPIDLQCYEQLPSSDEEEEEEEPTEKNVYRIEAACGFCGKGVRFFCLSQKEDLRVLQVTLLSLSLVCTTCVQTAKLDHGG.

The E7 terminal domain stretch occupies residues Met-1–Glu-39. Positions Leu-22–Glu-26 match the LXCXE motif; interaction with host RB1 and TMEM173/STING motif. The segment at Cys-52–Cys-87 is a zinc-finger region. Positions Leu-70–Leu-78 match the Nuclear export signal motif.

This sequence belongs to the papillomaviridae E7 protein family. As to quaternary structure, homodimer. Homooligomer. Interacts with host RB1; this interaction induces dissociation of RB1-E2F1 complex thereby disrupting RB1 activity. Interacts with host EP300; this interaction represses EP300 transcriptional activity. Interacts with protein E2; this interaction inhibits E7 oncogenic activity. Interacts with host TMEM173/STING; this interaction impairs the ability of TMEM173/STING to sense cytosolic DNA and promote the production of type I interferon (IFN-alpha and IFN-beta). In terms of processing, highly phosphorylated.

It localises to the host cytoplasm. The protein resides in the host nucleus. Functionally, plays a role in viral genome replication by driving entry of quiescent cells into the cell cycle. Stimulation of progression from G1 to S phase allows the virus to efficiently use the cellular DNA replicating machinery to achieve viral genome replication. E7 protein has both transforming and trans-activating activities. Induces the disassembly of the E2F1 transcription factor from RB1, with subsequent transcriptional activation of E2F1-regulated S-phase genes. Interferes with host histone deacetylation mediated by HDAC1 and HDAC2, leading to transcription activation. Also plays a role in the inhibition of both antiviral and antiproliferative functions of host interferon alpha. Interaction with host TMEM173/STING impairs the ability of TMEM173/STING to sense cytosolic DNA and promote the production of type I interferon (IFN-alpha and IFN-beta). This Canis lupus familiaris (Dog) protein is Protein E7.